The following is a 190-amino-acid chain: Adenylate kinase (190 aa).

ATP is bound at residue 11–16; sequence GSGKGT. Positions 31-60 are NMP; the sequence is STGDVLRGEMKAETELGKIAKDYIEKGQLV. Residues Thr-32, Arg-37, 58-60, 86-89, and Gln-93 each bind AMP; these read QLV and GFPR. The LID stretch occupies residues 127–137; the sequence is ERGKVSGRSDD. Arg-128 is an ATP binding site. AMP-binding residues include Arg-134 and Arg-145. Gly-173 is a binding site for ATP.

Belongs to the adenylate kinase family. As to quaternary structure, monomer.

The protein resides in the cytoplasm. The catalysed reaction is AMP + ATP = 2 ADP. It participates in purine metabolism; AMP biosynthesis via salvage pathway; AMP from ADP: step 1/1. Catalyzes the reversible transfer of the terminal phosphate group between ATP and AMP. Plays an important role in cellular energy homeostasis and in adenine nucleotide metabolism. The protein is Adenylate kinase of Parabacteroides distasonis (strain ATCC 8503 / DSM 20701 / CIP 104284 / JCM 5825 / NCTC 11152).